We begin with the raw amino-acid sequence, 501 residues long: Glutamyl-tRNA(Gln) amidotransferase subunit A (501 aa).

Residues Lys-80 and Ser-155 each act as charge relay system in the active site. The Acyl-ester intermediate role is filled by Ser-179.

It belongs to the amidase family. GatA subfamily. In terms of assembly, heterotrimer of A, B and C subunits.

The enzyme catalyses L-glutamyl-tRNA(Gln) + L-glutamine + ATP + H2O = L-glutaminyl-tRNA(Gln) + L-glutamate + ADP + phosphate + H(+). Allows the formation of correctly charged Gln-tRNA(Gln) through the transamidation of misacylated Glu-tRNA(Gln) in organisms which lack glutaminyl-tRNA synthetase. The reaction takes place in the presence of glutamine and ATP through an activated gamma-phospho-Glu-tRNA(Gln). The protein is Glutamyl-tRNA(Gln) amidotransferase subunit A of Cupriavidus taiwanensis (strain DSM 17343 / BCRC 17206 / CCUG 44338 / CIP 107171 / LMG 19424 / R1) (Ralstonia taiwanensis (strain LMG 19424)).